The chain runs to 245 residues: Carboxy-S-adenosyl-L-methionine synthase (245 aa).

S-adenosyl-L-methionine-binding positions include tyrosine 39, 64–66, 117–118, and arginine 199; these read GSS and DI.

This sequence belongs to the class I-like SAM-binding methyltransferase superfamily. Cx-SAM synthase family. Homodimer.

The catalysed reaction is prephenate + S-adenosyl-L-methionine = carboxy-S-adenosyl-L-methionine + 3-phenylpyruvate + H2O. In terms of biological role, catalyzes the conversion of S-adenosyl-L-methionine (SAM) to carboxy-S-adenosyl-L-methionine (Cx-SAM). This chain is Carboxy-S-adenosyl-L-methionine synthase, found in Desulfotalea psychrophila (strain LSv54 / DSM 12343).